We begin with the raw amino-acid sequence, 136 residues long: Autophagy-related protein 41 (136 aa).

The interval 127–136 (QNYRLWLSSV) is ATG9-binding.

Interacts with ATG9.

The protein localises to the preautophagosomal structure membrane. In terms of biological role, involved in both selective and non-selective autophagy. Does not appear to play a role in determining the size of autophagosomes, but rather influences their formation rate. With ATG9, plays a role in the delivery of donor membrane to expanding phagophore. This chain is Autophagy-related protein 41, found in Saccharomyces cerevisiae (strain ATCC 204508 / S288c) (Baker's yeast).